The chain runs to 600 residues: Elongation factor 4 (600 aa).

Positions 13 to 194 constitute a tr-type G domain; the sequence is DRIRNFCIIA…AIVERIPPPR (182 aa). GTP contacts are provided by residues 25–30 and 141–144; these read DHGKST and NKID.

The protein belongs to the TRAFAC class translation factor GTPase superfamily. Classic translation factor GTPase family. LepA subfamily.

It localises to the cell membrane. It catalyses the reaction GTP + H2O = GDP + phosphate + H(+). Required for accurate and efficient protein synthesis under certain stress conditions. May act as a fidelity factor of the translation reaction, by catalyzing a one-codon backward translocation of tRNAs on improperly translocated ribosomes. Back-translocation proceeds from a post-translocation (POST) complex to a pre-translocation (PRE) complex, thus giving elongation factor G a second chance to translocate the tRNAs correctly. Binds to ribosomes in a GTP-dependent manner. This Rubrobacter xylanophilus (strain DSM 9941 / JCM 11954 / NBRC 16129 / PRD-1) protein is Elongation factor 4.